Reading from the N-terminus, the 220-residue chain is Casparian strip membrane protein 4 (220 aa).

Residues 1–39 form a disordered region; it reads MDSRREVEESSTAPILESKRTRSNGKGKSIDGDHSPPHA. The Cytoplasmic portion of the chain corresponds to 1-60; sequence MDSRREVEESSTAPILESKRTRSNGKGKSIDGDHSPPHAATVVTTKATPLQKGGMKKGIA. A helical transmembrane segment spans residues 61 to 81; that stretch reads ILDFILRLGAIGAALGAAVIM. At 82 to 108 the chain is on the extracellular side; that stretch reads GTNEQILPFFTQFLQFHAQWDDFPMFK. The helical transmembrane segment at 109-129 threads the bilayer; sequence FFVVANGAAAGFLILSLPFSI. Residues 130 to 141 are Cytoplasmic-facing; that stretch reads VCIVRPLAAGPR. Residues 142–162 form a helical membrane-spanning segment; sequence FLLVIVDLVLMALVVAAASSA. Residues 163–194 lie on the Extracellular side of the membrane; sequence AAVVYLAHNGSQDANWNAICQQFTDFCQGSSL. The N-linked (GlcNAc...) asparagine glycan is linked to N171. The chain crosses the membrane as a helical span at residues 195–215; it reads AVVASFVASVFLACLVVVSSV. The Cytoplasmic portion of the chain corresponds to 216–220; that stretch reads ALKRT.

This sequence belongs to the Casparian strip membrane proteins (CASP) family. Homodimer and heterodimers.

It localises to the cell membrane. Functionally, regulates membrane-cell wall junctions and localized cell wall deposition. Required for establishment of the Casparian strip membrane domain (CSD) and the subsequent formation of Casparian strips, a cell wall modification of the root endodermis that determines an apoplastic barrier between the intraorganismal apoplasm and the extraorganismal apoplasm and prevents lateral diffusion. This Medicago truncatula (Barrel medic) protein is Casparian strip membrane protein 4.